We begin with the raw amino-acid sequence, 291 residues long: 33 kDa chaperonin (291 aa).

Intrachain disulfides connect Cys-235-Cys-237 and Cys-268-Cys-271.

The protein belongs to the HSP33 family. In terms of processing, under oxidizing conditions two disulfide bonds are formed involving the reactive cysteines. Under reducing conditions zinc is bound to the reactive cysteines and the protein is inactive.

The protein localises to the cytoplasm. Redox regulated molecular chaperone. Protects both thermally unfolding and oxidatively damaged proteins from irreversible aggregation. Plays an important role in the bacterial defense system toward oxidative stress. This is 33 kDa chaperonin from Bacillus subtilis (strain 168).